Consider the following 171-residue polypeptide: UPF0398 protein M28_Spy1394 (171 aa).

This sequence belongs to the UPF0398 family.

The polypeptide is UPF0398 protein M28_Spy1394 (Streptococcus pyogenes serotype M28 (strain MGAS6180)).